Here is a 545-residue protein sequence, read N- to C-terminus: ATP synthase subunit alpha (545 aa).

173 to 180 is an ATP binding site; the sequence is GDRKTGKT.

The protein belongs to the ATPase alpha/beta chains family. As to quaternary structure, F-type ATPases have 2 components, CF(1) - the catalytic core - and CF(0) - the membrane proton channel. CF(1) has five subunits: alpha(3), beta(3), gamma(1), delta(1), epsilon(1). CF(0) has three main subunits: a(1), b(2) and c(9-12). The alpha and beta chains form an alternating ring which encloses part of the gamma chain. CF(1) is attached to CF(0) by a central stalk formed by the gamma and epsilon chains, while a peripheral stalk is formed by the delta and b chains.

The protein resides in the cell membrane. It carries out the reaction ATP + H2O + 4 H(+)(in) = ADP + phosphate + 5 H(+)(out). Functionally, produces ATP from ADP in the presence of a proton gradient across the membrane. The alpha chain is a regulatory subunit. In Renibacterium salmoninarum (strain ATCC 33209 / DSM 20767 / JCM 11484 / NBRC 15589 / NCIMB 2235), this protein is ATP synthase subunit alpha.